The chain runs to 196 residues: 7-methyl-GTP pyrophosphatase (196 aa).

The Proton acceptor role is filled by aspartate 69.

Belongs to the Maf family. YceF subfamily. The cofactor is a divalent metal cation.

It is found in the cytoplasm. The catalysed reaction is N(7)-methyl-GTP + H2O = N(7)-methyl-GMP + diphosphate + H(+). Its function is as follows. Nucleoside triphosphate pyrophosphatase that hydrolyzes 7-methyl-GTP (m(7)GTP). May have a dual role in cell division arrest and in preventing the incorporation of modified nucleotides into cellular nucleic acids. This Photorhabdus laumondii subsp. laumondii (strain DSM 15139 / CIP 105565 / TT01) (Photorhabdus luminescens subsp. laumondii) protein is 7-methyl-GTP pyrophosphatase.